A 539-amino-acid chain; its full sequence is Chaperonin GroEL (539 aa).

ATP-binding positions include 29–32, 86–90, Gly-413, 476–478, and Asp-492; these read TLGP, DGTTT, and NAA.

The protein belongs to the chaperonin (HSP60) family. Forms a cylinder of 14 subunits composed of two heptameric rings stacked back-to-back. Interacts with the co-chaperonin GroES.

It localises to the cytoplasm. The catalysed reaction is ATP + H2O + a folded polypeptide = ADP + phosphate + an unfolded polypeptide.. In terms of biological role, together with its co-chaperonin GroES, plays an essential role in assisting protein folding. The GroEL-GroES system forms a nano-cage that allows encapsulation of the non-native substrate proteins and provides a physical environment optimized to promote and accelerate protein folding. The chain is Chaperonin GroEL from Geobacillus sp. (strain WCH70).